The chain runs to 541 residues: Tyrosine-protein phosphatase non-receptor type 5 (541 aa).

The disordered stretch occupies residues 1–55 (MCCSERLLGLPQPVEMEAPDEAEGLPSKQKEMPPPPPPSPPSEPAQKLPPQGAGS). Positions 32–43 (MPPPPPPSPPSE) are enriched in pro residues. 2 consecutive transmembrane segments (helical) span residues 64-84 (LCLF…LSGH) and 122-142 (LLLV…WHLL). The residue at position 221 (Ser-221) is a Phosphoserine; by PKA. Thr-231 is subject to Phosphothreonine; by MAPK. Ser-244 bears the Phosphoserine; by MAPK mark. One can recognise a Tyrosine-protein phosphatase domain in the interval 276–531 (LQAEFFEIPM…QFVHHAMSLY (256 aa)). Substrate is bound by residues Asp-437, 472–478 (CSAGIGR), and Gln-516. Cys-472 (phosphocysteine intermediate) is an active-site residue.

Belongs to the protein-tyrosine phosphatase family. Non-receptor class subfamily. Phosphorylation at Ser-221 by PKA deactivates PTPN5. Phosphorylation at Thr-231 and Ser-244 by MAPKs stabilizes the phosphatase, dephosphorylation of these sites results in ubiquitin-mediated degradation of the active phosphatase. As to expression, STEP20 is expressed only in the CNS.

Its subcellular location is the endoplasmic reticulum membrane. It is found in the cytoplasm. The enzyme catalyses O-phospho-L-tyrosyl-[protein] + H2O = L-tyrosyl-[protein] + phosphate. Functionally, may regulate the activity of several effector molecules involved in synaptic plasticity and neuronal cell survival, including MAPKs, Src family kinases and NMDA receptors. The protein is Tyrosine-protein phosphatase non-receptor type 5 (Ptpn5) of Mus musculus (Mouse).